The chain runs to 1722 residues: Leucine-rich repeat- and IQ domain-containing protein 1 (1722 aa).

Disordered regions lie at residues 23–47 (SLEK…TDSV), 182–202 (EDKE…QFQE), 265–285 (RTRF…QQNN), and 319–367 (QEWK…YEEK). The span at 38 to 47 (QSDDSDTDSV) shows a compositional bias: acidic residues. The segment covering 265–278 (RTRFKDQQEKEKNS) has biased composition (basic and acidic residues). The IQ 1 domain occupies 283–312 (QNNAAVKIQAKYKAFVAYQKYGPIIKEQIE). 10 LRR repeats span residues 819–840 (NLQF…SNCK), 841–861 (KLKY…ENLE), 862–883 (NLCV…DGCT), 884–905 (NIQC…FFLE), 970–991 (NLQQ…CDTP), 992–1013 (TIVY…ENCG), 1014–1035 (LLQI…ENLV), 1036–1057 (LLRE…SSYW), 1060–1081 (LLQN…FHFV), and 1082–1103 (SLEK…IKWF). The LRRCT domain occupies 1117 to 1157 (NPLLQETNWRDSLLKVLPALRILNGNILNSNSESRTEEHNQ). 2 consecutive IQ domains span residues 1335-1364 (KIMA…LHTA) and 1395-1424 (REKA…AIKN). Positions 1506–1524 (SEHTQFNSRSENKTSSWTP) are enriched in polar residues. The disordered stretch occupies residues 1506-1534 (SEHTQFNSRSENKTSSWTPESKTSRKSLL).

The sequence is that of Leucine-rich repeat- and IQ domain-containing protein 1 (LRRIQ1) from Homo sapiens (Human).